We begin with the raw amino-acid sequence, 100 residues long: MKLTPREKDKLLIFTAALLAERRRARGLKLNYPEAIAFITAALMEAARDGKTVAEVMHYGTTLLTRDDVMDGVPEMIPDIQVEATFPDGTKLVTVHHPIP.

The protein belongs to the urease gamma subunit family. As to quaternary structure, heterotrimer of UreA (gamma), UreB (beta) and UreC (alpha) subunits. Three heterotrimers associate to form the active enzyme.

It is found in the cytoplasm. The catalysed reaction is urea + 2 H2O + H(+) = hydrogencarbonate + 2 NH4(+). It functions in the pathway nitrogen metabolism; urea degradation; CO(2) and NH(3) from urea (urease route): step 1/1. The protein is Urease subunit gamma of Burkholderia orbicola (strain MC0-3).